The following is a 614-amino-acid chain: Probable Xaa-Pro aminopeptidase P (614 aa).

4 residues coordinate Mn(2+): aspartate 409, aspartate 420, glutamate 518, and glutamate 532.

This sequence belongs to the peptidase M24B family. Mn(2+) is required as a cofactor.

It catalyses the reaction Release of any N-terminal amino acid, including proline, that is linked to proline, even from a dipeptide or tripeptide.. In terms of biological role, catalyzes the removal of a penultimate prolyl residue from the N-termini of peptides. This chain is Probable Xaa-Pro aminopeptidase P (ampp), found in Aspergillus niger (strain ATCC MYA-4892 / CBS 513.88 / FGSC A1513).